A 715-amino-acid chain; its full sequence is MIYEGKAITVTALESGIVELKFDLKGESVNKFNRLTLNELRQAVDAIKADASVKGVIVSSGKDVFIVGADITEFVENFKLPDAELIAGNLEANKIFSDFEDLNVPTVAAINGIALGGGLEMCLAADFRVMADSAKIGLPEVKLGIYPGFGGTVRLPRLIGVDNAVEWIASGKENRAEDALKVSAVDAVVTADKLGAAALDLIKRAISGELDYKAKRQPKLEKLKLNAIEQMMAFETAKGFVAGQAGPNYPAPVEAIKTIQKAANFGRDKALEVEAAGFAKLAKTSASNCLIGLFLNDQELKKKAKVYDKIAKDVKQAAVLGAGIMGGGIAYQSASKGTPILMKDINEHGIEQGLAEAAKLLVGRVDKGRMTPAKMAEVLNGIRPTLSYGDFGNVDLVVEAVVENPKVKQAVLAEVENHVREDAILASNTSTISISLLAKALKRPENFVGMHFFNPVHMMPLVEVIRGEKSSDLAVATTVAYAKKMGKNPIVVNDCPGFLVNRVLFPYFGGFAKLVSAGVDFVRIDKVMEKFGWPMGPAYLMDVVGIDTGHHGRDVMAEGFPDRMKDDRRSAIDALYEAKRLGQKNGKGFYAYEADKKGKQKKLVDSSVLEVLKPIVYEQRDVTDEDIINWMMIPLCLETVRCLEDGIVETAAEADMGLVYGIGFPLFRGGALRYIDSIGVAEFVALADQYAELGALYHPTAKLREMAKNGQSFFG.

Residues methionine 1 to threonine 190 are enoyl-CoA hydratase/isomerase. Aspartate 297 is a binding site for substrate. Residues lysine 312–glycine 715 are 3-hydroxyacyl-CoA dehydrogenase. NAD(+) contacts are provided by residues methionine 325, aspartate 344, valine 401–glutamate 403, lysine 408, and serine 430. Histidine 451 acts as the For 3-hydroxyacyl-CoA dehydrogenase activity in catalysis. Asparagine 454 is an NAD(+) binding site. Residues asparagine 501 and tyrosine 660 each contribute to the substrate site.

It in the N-terminal section; belongs to the enoyl-CoA hydratase/isomerase family. This sequence in the C-terminal section; belongs to the 3-hydroxyacyl-CoA dehydrogenase family. As to quaternary structure, heterotetramer of two alpha chains (FadB) and two beta chains (FadA).

It catalyses the reaction a (3S)-3-hydroxyacyl-CoA + NAD(+) = a 3-oxoacyl-CoA + NADH + H(+). The catalysed reaction is a (3S)-3-hydroxyacyl-CoA = a (2E)-enoyl-CoA + H2O. It carries out the reaction a 4-saturated-(3S)-3-hydroxyacyl-CoA = a (3E)-enoyl-CoA + H2O. The enzyme catalyses (3S)-3-hydroxybutanoyl-CoA = (3R)-3-hydroxybutanoyl-CoA. It catalyses the reaction a (3Z)-enoyl-CoA = a 4-saturated (2E)-enoyl-CoA. The catalysed reaction is a (3E)-enoyl-CoA = a 4-saturated (2E)-enoyl-CoA. It functions in the pathway lipid metabolism; fatty acid beta-oxidation. In terms of biological role, involved in the aerobic and anaerobic degradation of long-chain fatty acids via beta-oxidation cycle. Catalyzes the formation of 3-oxoacyl-CoA from enoyl-CoA via L-3-hydroxyacyl-CoA. It can also use D-3-hydroxyacyl-CoA and cis-3-enoyl-CoA as substrate. The protein is Fatty acid oxidation complex subunit alpha of Pseudomonas fragi.